A 328-amino-acid chain; its full sequence is MANRAYLEQKQTQCSIINSSFSMTHRDLPTLTLSGKIRVMVTFFLFLVSTAFNASFLMKLQRQTQKKEEVKKLTRMKVLLKHLTLANLLETVIVMPLDGIWNVTVQWYAGEFLCKALSYLKLFSMYAPAFMMVVISLDRFLAITRPLAVKSNTKVGQSLIAVAWFLSIVLAGPQLYIFRMIYVEDISGQTGNFSQCVTHCSFPEWWQEAFYNLLTFSCLFIGPLLIMLVCNAKIIFTLTQVLHQDPHELQLNRSKNNIPRARLRTLKMTVAFATLFTICWTPYYVLGIWYWFDPEMLNRVSDPVNHFFFLFGLLNPCFDPLIYGYFSL.

Topologically, residues 1-38 (MANRAYLEQKQTQCSIINSSFSMTHRDLPTLTLSGKIR) are extracellular. A glycan (N-linked (GlcNAc...) asparagine) is linked at Asn-18. A helical transmembrane segment spans residues 39 to 58 (VMVTFFLFLVSTAFNASFLM). Topologically, residues 59–77 (KLQRQTQKKEEVKKLTRMK) are cytoplasmic. Residues 78–97 (VLLKHLTLANLLETVIVMPL) traverse the membrane as a helical segment. At 98-115 (DGIWNVTVQWYAGEFLCK) the chain is on the extracellular side. The N-linked (GlcNAc...) asparagine glycan is linked to Asn-102. An intrachain disulfide couples Cys-114 to Cys-196. The chain crosses the membrane as a helical span at residues 116-137 (ALSYLKLFSMYAPAFMMVVISL). Residues 138–164 (DRFLAITRPLAVKSNTKVGQSLIAVAW) are Cytoplasmic-facing. Residues 165–184 (FLSIVLAGPQLYIFRMIYVE) traverse the membrane as a helical segment. At 185 to 212 (DISGQTGNFSQCVTHCSFPEWWQEAFYN) the chain is on the extracellular side. An N-linked (GlcNAc...) asparagine glycan is attached at Asn-192. Residues 213–232 (LLTFSCLFIGPLLIMLVCNA) form a helical membrane-spanning segment. The Cytoplasmic segment spans residues 233 to 281 (KIIFTLTQVLHQDPHELQLNRSKNNIPRARLRTLKMTVAFATLFTICWT). A helical membrane pass occupies residues 282–300 (PYYVLGIWYWFDPEMLNRV). Over 301–306 (SDPVNH) the chain is Extracellular. Residues 307 to 326 (FFFLFGLLNPCFDPLIYGYF) traverse the membrane as a helical segment. The Cytoplasmic segment spans residues 327-328 (SL).

This sequence belongs to the G-protein coupled receptor 1 family.

The protein resides in the cell membrane. In terms of biological role, receptor for gonadotropin releasing hormone (GnRH) that mediates the action of GnRH to stimulate the secretion of the gonadotropic hormones luteinizing hormone (LH) and follicle-stimulating hormone (FSH). This receptor mediates its action by association with G-proteins that activate a phosphatidylinositol-calcium second messenger system. This is Gonadotropin-releasing hormone receptor (GNRHR) from Trichosurus vulpecula (Brush-tailed possum).